The sequence spans 439 residues: GTPase Der (439 aa).

EngA-type G domains follow at residues proline 3–glycine 167 and isoleucine 176–threonine 351. GTP-binding positions include glycine 9 to serine 16, aspartate 56 to isoleucine 60, asparagine 119 to aspartate 122, glycine 182 to serine 189, aspartate 229 to leucine 233, and asparagine 294 to aspartate 297. Residues arginine 352–glycine 436 form the KH-like domain.

The protein belongs to the TRAFAC class TrmE-Era-EngA-EngB-Septin-like GTPase superfamily. EngA (Der) GTPase family. Associates with the 50S ribosomal subunit.

Its function is as follows. GTPase that plays an essential role in the late steps of ribosome biogenesis. The polypeptide is GTPase Der (Caldicellulosiruptor saccharolyticus (strain ATCC 43494 / DSM 8903 / Tp8T 6331)).